The chain runs to 1507 residues: Histone-lysine N-methyltransferase set-2 (1507 aa).

A disordered region spans residues 1–32 (MSTHDMNHHPPRKSHSKRDKPSSSNSGPKIEN). The span at 9–18 (HPPRKSHSKR) shows a compositional bias: basic residues. One can recognise an RRM domain in the interval 128 to 199 (VSLFNMDDNC…QNLLATKCTP (72 aa)). Disordered stretches follow at residues 280–578 (DYTM…QPQM), 650–697 (EPFS…EEPA), 803–826 (DEEK…SNHL), 842–1058 (SSRG…GPII), and 1163–1199 (QKPR…FKPR). The span at 296–315 (PIPPPPIKEESPPPPPPPPV) shows a compositional bias: pro residues. Low complexity predominate over residues 316–327 (ASVSNLAPVPSV). Residues 331-342 (YYNNIQPSSSTM) are compositionally biased toward polar residues. The segment covering 413 to 444 (VKYETYKMEKRKIKYEGGNKKYEQVHIKERTA) has biased composition (basic and acidic residues). The span at 456–465 (SSESASGSSS) shows a compositional bias: low complexity. Positions 478–488 (KKKKRPKSPNR) are enriched in basic residues. A compositionally biased stretch (polar residues) spans 566–575 (HLQTPYQHVQ). 2 stretches are compositionally biased toward basic and acidic residues: residues 668-680 (DVGR…KPSL) and 803-823 (DEEK…EKPS). The span at 846-868 (FYRKQKPIPKSHPKHQEHHHHAK) shows a compositional bias: basic residues. Low complexity predominate over residues 869 to 908 (ASVSTPVHSSSTSRNSSVAPTPQRTVSTSSSSSSAATSAR). A compositionally biased stretch (polar residues) spans 941–951 (SFSSTSIQSSP). Residues 958–971 (SSSSRTSSSSSTSS) are compositionally biased toward low complexity. The segment covering 973-982 (KQEETADEKS) has biased composition (basic and acidic residues). The span at 990 to 1007 (SSDESSTTGSTATSVVSS) shows a compositional bias: low complexity. The span at 1015–1047 (QQEKTDGEPPKKKSQTDFISERVSKIEGEERPL) shows a compositional bias: basic and acidic residues. Over residues 1179–1190 (EPPPTKRPAPPP) the composition is skewed to pro residues. Residues 1340-1345 (RLLQRR) carry the RxxxRR motif motif. Positions 1368-1485 (KMIKFARSRI…KGEEITYDYK (118 aa)) constitute an SET domain. Tyr-1484 provides a ligand contact to S-adenosyl-L-methionine. Residues 1491–1507 (DKIDCLCGAKTCRGYLN) form the Post-SET domain.

Belongs to the class V-like SAM-binding methyltransferase superfamily. In terms of assembly, component of the Set1C/COMPASS complex (also known as the SET2 complex), which contains at least set-2, swd-2.1, cfp-1, rbbp-5, wdr-5.1, dpy-30 and ash-2. Expressed in all cells of embryo. In L1 larva, it is predominantly expressed in Z2 and Z3 primordial germ cells. In adults, it is predominantly expressed in the germline.

Its subcellular location is the nucleus. The catalysed reaction is L-lysyl(4)-[histone H3] + 3 S-adenosyl-L-methionine = N(6),N(6),N(6)-trimethyl-L-lysyl(4)-[histone H3] + 3 S-adenosyl-L-homocysteine + 3 H(+). The enzyme catalyses N(6)-methyl-L-lysyl(4)-[histone H3] + S-adenosyl-L-methionine = N(6),N(6)-dimethyl-L-lysyl(4)-[histone H3] + S-adenosyl-L-homocysteine + H(+). It catalyses the reaction N(6),N(6)-dimethyl-L-lysyl(4)-[histone H3] + S-adenosyl-L-methionine = N(6),N(6),N(6)-trimethyl-L-lysyl(4)-[histone H3] + S-adenosyl-L-homocysteine + H(+). Functionally, catalytic component of the COMPASS (Set1C) complex that specifically mono-, di- and trimethylates histone H3 to form H3K4me1/2/3. Binds RNAs which might negatively affect its histone methyltransferase activity. COMPASS recognizes ubiquitinated H2B on one face of the nucleosome which stimulates the methylation of H3 on the opposing face. H3 'Lys-4' methylation represents a specific tag for epigenetic transcriptional activation. Implicated in the epigenetic inheritance of lifespan over several generations. Acts in the germline to limit the longevity of the soma, probably by regulating a lipid metabolism pathway that signals from the germline to the intestine, thereby preventing accumulation of mono-unsaturated fatty acids. Methylation in the germline is required for germline development and fertility, possibly by ensuring genome stability. May act redundantly with mes-3 and mes-4 proteins in the development of a fertile germline. Required for RNAi. Functions as an antagonist of hpl-1 and hpl-2 activity in growth and somatic gonad development. Cooperates with jmjd-3.1 and egl-27 to ensure robust transdifferentiation of the Y rectal cell to the PDA motor neuron during larval development. The polypeptide is Histone-lysine N-methyltransferase set-2 (set-2) (Caenorhabditis elegans).